Reading from the N-terminus, the 309-residue chain is Coproporphyrin III ferrochelatase (309 aa).

Residues Tyr12, Arg29, Arg45–Tyr46, Ser53, and Tyr124 each bind Fe-coproporphyrin III. Fe(2+) is bound by residues His182 and Glu263.

This sequence belongs to the ferrochelatase family.

The protein localises to the cytoplasm. The catalysed reaction is Fe-coproporphyrin III + 2 H(+) = coproporphyrin III + Fe(2+). The protein operates within porphyrin-containing compound metabolism; protoheme biosynthesis. In terms of biological role, involved in coproporphyrin-dependent heme b biosynthesis. Catalyzes the insertion of ferrous iron into coproporphyrin III to form Fe-coproporphyrin III. The protein is Coproporphyrin III ferrochelatase of Listeria innocua serovar 6a (strain ATCC BAA-680 / CLIP 11262).